The sequence spans 148 residues: MALSRSVGRGSKLTSPKNDTYLLASFRWNLDRDLLFRCERYFCMWASTGYSSSCSCFPATRSASVDSTPSVDSTGSTSDVVDDRGETSMDSCGRITLSYVTECRLLASAELSLRILRNSSSCNKSLVSVILAICFGALAASRAEQPPA.

Residues 65 to 79 (VDSTPSVDSTGSTSD) show a composition bias toward low complexity. A disordered region spans residues 65-85 (VDSTPSVDSTGSTSDVVDDRG).

This is an uncharacterized protein from Saccharomyces cerevisiae (strain ATCC 204508 / S288c) (Baker's yeast).